Consider the following 103-residue polypeptide: NADH-quinone oxidoreductase subunit K 1 (103 aa).

Transmembrane regions (helical) follow at residues 6–26 (LGHF…GIFL), 32–52 (IIIL…LVAF), and 67–87 (LVLT…VVFF).

Belongs to the complex I subunit 4L family. NDH-1 is composed of 14 different subunits. Subunits NuoA, H, J, K, L, M, N constitute the membrane sector of the complex.

The protein resides in the cell inner membrane. The enzyme catalyses a quinone + NADH + 5 H(+)(in) = a quinol + NAD(+) + 4 H(+)(out). Functionally, NDH-1 shuttles electrons from NADH, via FMN and iron-sulfur (Fe-S) centers, to quinones in the respiratory chain. The immediate electron acceptor for the enzyme in this species is believed to be ubiquinone. Couples the redox reaction to proton translocation (for every two electrons transferred, four hydrogen ions are translocated across the cytoplasmic membrane), and thus conserves the redox energy in a proton gradient. In Rhodopseudomonas palustris (strain ATCC BAA-98 / CGA009), this protein is NADH-quinone oxidoreductase subunit K 1.